We begin with the raw amino-acid sequence, 358 residues long: Protein phosphatase 1 regulatory subunit 3G (358 aa).

Residues 1-71 (MEPIGARLSL…KEEAAPQEQE (71 aa)) form a disordered region. The segment covering 11-29 (EAPGPAPFREAPPAEELPA) has biased composition (low complexity). Ser-86 carries the phosphoserine modification. The CBM21 domain occupies 210–350 (AERLQRQRVC…NNAGANYTLR (141 aa)). Positions 270–280 (EPLEPQQPEAP) are enriched in low complexity. The disordered stretch occupies residues 270-295 (EPLEPQQPEAPSGASEPGSGDAKKEP).

Glycogen-targeting subunit for protein phosphatase 1 (PP1). Involved in the regulation of hepatic glycogenesis in a manner coupled to the fasting-feeding cycle and distinct from other glycogen-targeting subunits. This Homo sapiens (Human) protein is Protein phosphatase 1 regulatory subunit 3G (PPP1R3G).